The chain runs to 465 residues: Respiratory transcription factor ZNF1 (465 aa).

The zn(2)-C6 fungal-type DNA-binding region spans 8–34; it reads CDCCCIRRVKCDRKKPCKCCLQHNLQC.

It belongs to the MAL13 family.

It localises to the nucleus. Functionally, transcription factor that regulates respiratory growth and plays a critical role in stress adaptation during non-fermentative growth. Binds to promoters of genes involved in non-fermentative metabolism, including processes such as gluconeogenesis (PCK1, FBP1 and MDH2), glyoxylate shunt (MLS1 and ICL1) and the tricarboxylic acid cycle (ACO1). Plays a role in maintaining mitochondrial morphology and function. Also plays a role in tolerance to pH and osmotic stress, especially during the oxidative metabolism. The chain is Respiratory transcription factor ZNF1 from Saccharomyces cerevisiae (strain ATCC 204508 / S288c) (Baker's yeast).